The chain runs to 198 residues: Nucleoid occlusion factor SlmA (198 aa).

One can recognise an HTH tetR-type domain in the interval 10–70; that stretch reads NRREEILQSL…SLIEFIEDSL (61 aa). A DNA-binding region (H-T-H motif) is located at residues 33-52; it reads TTAKLAASVGVSEAALYRHF. Residues 117 to 144 are a coiled coil; the sequence is EQDRLQGRINQLFERIEAQLRQVLREKR.

This sequence belongs to the nucleoid occlusion factor SlmA family. Homodimer. Interacts with FtsZ.

The protein resides in the cytoplasm. It localises to the nucleoid. In terms of biological role, required for nucleoid occlusion (NO) phenomenon, which prevents Z-ring formation and cell division over the nucleoid. Acts as a DNA-associated cell division inhibitor that binds simultaneously chromosomal DNA and FtsZ, and disrupts the assembly of FtsZ polymers. SlmA-DNA-binding sequences (SBS) are dispersed on non-Ter regions of the chromosome, preventing FtsZ polymerization at these regions. The sequence is that of Nucleoid occlusion factor SlmA from Salmonella typhi.